The chain runs to 770 residues: Multifunctional tryptophan biosynthesis protein (770 aa).

Residues 25–225 form the Glutamine amidotransferase type-1 domain; that stretch reads NVILIDNYDS…LKLTAGTWEG (201 aa). 76–78 contacts L-glutamine; the sequence is GPG. The active-site Nucleophile; for GATase activity is the Cys104. Residues Gln108 and 154–155 each bind L-glutamine; that span reads SL. Residues His199 and Glu201 each act as for GATase activity in the active site. Residues 228–251 are disordered; the sequence is KHFGEQSSTTKATVPSNPPPKTDK. The span at 232–242 shows a compositional bias: polar residues; that stretch reads EQSSTTKATVP. An indole-3-glycerol phosphate synthase region spans residues 255 to 519; that stretch reads ILERIYDHRR…DTATFIAELL (265 aa). An N-(5'-phosphoribosyl)anthranilate isomerase region spans residues 535–770; the sequence is LVKICGTRSE…RAFVQAVRGL (236 aa).

The catalysed reaction is N-(5-phospho-beta-D-ribosyl)anthranilate = 1-(2-carboxyphenylamino)-1-deoxy-D-ribulose 5-phosphate. The enzyme catalyses 1-(2-carboxyphenylamino)-1-deoxy-D-ribulose 5-phosphate + H(+) = (1S,2R)-1-C-(indol-3-yl)glycerol 3-phosphate + CO2 + H2O. It carries out the reaction chorismate + L-glutamine = anthranilate + pyruvate + L-glutamate + H(+). Its pathway is amino-acid biosynthesis; L-tryptophan biosynthesis; L-tryptophan from chorismate: step 1/5. It functions in the pathway amino-acid biosynthesis; L-tryptophan biosynthesis; L-tryptophan from chorismate: step 3/5. It participates in amino-acid biosynthesis; L-tryptophan biosynthesis; L-tryptophan from chorismate: step 4/5. Functionally, trifunctional enzyme bearing the Gln amidotransferase (GATase) domain of anthranilate synthase, indole-glycerolphosphate synthase, and phosphoribosylanthranilate isomerase activities. This Aspergillus niger protein is Multifunctional tryptophan biosynthesis protein (trpC).